The sequence spans 311 residues: Taste receptor type 2 member 9 (311 aa).

Residues 1–9 (MPSTIEAIY) are Extracellular-facing. Residues 10-32 (IILIAGELTIGIWGNGFIVLVNC) form a helical membrane-spanning segment. Residues 33-52 (IDWLKRRDVSLIDIILISLA) are Cytoplasmic-facing. A helical transmembrane segment spans residues 53–72 (ISRICLLCVISLDGFFILLF). Residues 73-86 (PGTYDINVLESIMD) are Extracellular-facing. A helical transmembrane segment spans residues 87–109 (AVWTFANNSSLWFTSCLSIFYLL). Residues 110–128 (KIANISHPFFFWLKLKINK) are Cytoplasmic-facing. The chain crosses the membrane as a helical span at residues 129-146 (VILAILLGSFLISLIISF). Residues 147–179 (PINGXWYHLFKVSHEENITWAFKVSTIPGAFKQ) lie on the Extracellular side of the membrane. N-linked (GlcNAc...) asparagine glycosylation is present at Asn-163. Residues 180 to 202 (LTLNLGAMVPFMLCLISFFLLLF) traverse the membrane as a helical segment. At 203-233 (SLVRHTKQIQLHATGLRDPSTEAHMRAIKAV) the chain is on the cytoplasmic side. Residues 234–256 (IIFLLLLIVYYPVFLVMTSSTLI) form a helical membrane-spanning segment. The Extracellular portion of the chain corresponds to 257 to 260 (PQGK). Residues 261 to 283 (LVLMIGDIVTVIFPSSHSFILIM) traverse the membrane as a helical segment. The Cytoplasmic portion of the chain corresponds to 284 to 311 (GNSKLREAFLKMLRFVKGFLRRRKPFGP).

Belongs to the G-protein coupled receptor T2R family.

It is found in the membrane. Its function is as follows. Gustducin-coupled receptor implicated in the perception of bitter compounds in the oral cavity and the gastrointestinal tract. Signals through PLCB2 and the calcium-regulated cation channel TRPM5. This is Taste receptor type 2 member 9 (TAS2R9) from Papio hamadryas (Hamadryas baboon).